The following is a 35-amino-acid chain: Coenzyme PQQ synthesis protein A (35 aa).

The segment at residues 16 to 20 (EINMY) is a cross-link (pyrroloquinoline quinone (Glu-Tyr)).

This sequence belongs to the PqqA family.

It functions in the pathway cofactor biosynthesis; pyrroloquinoline quinone biosynthesis. Functionally, required for coenzyme pyrroloquinoline quinone (PQQ) biosynthesis. PQQ is probably formed by cross-linking a specific glutamate to a specific tyrosine residue and excising these residues from the peptide. This Ruegeria pomeroyi (strain ATCC 700808 / DSM 15171 / DSS-3) (Silicibacter pomeroyi) protein is Coenzyme PQQ synthesis protein A.